The sequence spans 395 residues: Leucine aminopeptidase 1 (395 aa).

An N-terminal signal peptide occupies residues 1–19 (MKHLSLLALAAVAPTTALA). A propeptide spanning residues 20–95 (GVIDHQQVTF…SVKSFEQTKV (76 aa)) is cleaved from the precursor. N-linked (GlcNAc...) asparagine glycosylation is present at asparagine 187. The Zn(2+) site is built by histidine 195, aspartate 214, glutamate 253, and aspartate 280. An intrachain disulfide couples cysteine 329 to cysteine 333. Histidine 362 is a Zn(2+) binding site.

This sequence belongs to the peptidase M28 family. M28E subfamily. Monomer. The cofactor is Zn(2+).

The protein localises to the secreted. Its function is as follows. Extracellular aminopeptidase that allows assimilation of proteinaceous substrates. This is Leucine aminopeptidase 1 (LAP1) from Uncinocarpus reesii (strain UAMH 1704).